A 146-amino-acid chain; its full sequence is MFGSYEKTLDSKNRLVIPSKFRDELGETFYITLGFEKSLEFRSKKSFEEFSNKISSNNLLDSKMRELSRYIFANTIEVSSDKLGRVIILDNLLKKAEIEKDAVIVGVGNKAELWSKEKFEKITNIYENEENIKKLTQELFEKGAVL.

2 consecutive SpoVT-AbrB domains span residues 4–46 and 75–118; these read SYEK…SKKS and TIEV…SKEK.

This sequence belongs to the MraZ family. In terms of assembly, forms oligomers.

It localises to the cytoplasm. The protein localises to the nucleoid. In Mycoplasma mobile (strain ATCC 43663 / 163K / NCTC 11711) (Mesomycoplasma mobile), this protein is Transcriptional regulator MraZ.